The following is a 758-amino-acid chain: Probable ubiquitin carboxyl-terminal hydrolase creB (758 aa).

The segment at 1-27 (MGSFLRSFRRDVGSSTPSVGATPAKKE) is disordered. A USP domain is found at 57–468 (FGMENYGNTC…CAYVLFYQET (412 aa)). C66 serves as the catalytic Nucleophile. Disordered stretches follow at residues 116-148 (AEAQ…DSSE) and 243-268 (QPIP…SKTP). Residues 253–268 (TTDSSRQSISSGSKTP) are compositionally biased toward polar residues. H419 (proton acceptor) is an active-site residue. Residues 514 to 744 (IPVQDEPQRH…KGDRAGHGKW (231 aa)) are disordered. Positions 554 to 563 (ATPPPVPPIP) are enriched in pro residues. A coiled-coil region spans residues 573 to 631 (KKSDIQSKKERAKEEKERKAAEKEMEKQRRKEQEARVKENQRREEAELKAALEASKASK). Composition is skewed to basic and acidic residues over residues 573 to 650 (KKSD…DPKR) and 729 to 740 (DALKSPKGDRAG).

It belongs to the peptidase C19 family. In terms of assembly, interacts with creA, creC and qutD.

The enzyme catalyses Thiol-dependent hydrolysis of ester, thioester, amide, peptide and isopeptide bonds formed by the C-terminal Gly of ubiquitin (a 76-residue protein attached to proteins as an intracellular targeting signal).. Functionally, ubiquitin thioesterase component of the regulatory network controlling carbon source utilization through ubiquitination and deubiquitination involving creA, creB, creC, creD and acrB. Deubiquitinates the creA catabolic repressor and the quinate permease qutD. Also plays a role in response to carbon starvation and the control of extracellular proteases activity. This Aspergillus niger (strain ATCC MYA-4892 / CBS 513.88 / FGSC A1513) protein is Probable ubiquitin carboxyl-terminal hydrolase creB (creB).